The chain runs to 858 residues: Bifunctional uridylyltransferase/uridylyl-removing enzyme (858 aa).

Positions Met-1 to Ala-318 are uridylyltransferase. The uridylyl-removing stretch occupies residues Ile-319–Leu-674. The HD domain maps to Val-437 to Leu-559. ACT domains lie at Gln-675–Val-756 and Arg-789–Glu-858.

It belongs to the GlnD family. Mg(2+) is required as a cofactor.

The enzyme catalyses [protein-PII]-L-tyrosine + UTP = [protein-PII]-uridylyl-L-tyrosine + diphosphate. It catalyses the reaction [protein-PII]-uridylyl-L-tyrosine + H2O = [protein-PII]-L-tyrosine + UMP + H(+). Its activity is regulated as follows. Uridylyltransferase (UTase) activity is inhibited by glutamine, while glutamine activates uridylyl-removing (UR) activity. Functionally, modifies, by uridylylation and deuridylylation, the PII regulatory proteins (GlnB and homologs), in response to the nitrogen status of the cell that GlnD senses through the glutamine level. Under low glutamine levels, catalyzes the conversion of the PII proteins and UTP to PII-UMP and PPi, while under higher glutamine levels, GlnD hydrolyzes PII-UMP to PII and UMP (deuridylylation). Thus, controls uridylylation state and activity of the PII proteins, and plays an important role in the regulation of nitrogen assimilation and metabolism. This chain is Bifunctional uridylyltransferase/uridylyl-removing enzyme, found in Bordetella avium (strain 197N).